We begin with the raw amino-acid sequence, 876 residues long: Leucine--tRNA ligase (876 aa).

A 'HIGH' region motif is present at residues 42–52 (PYPSGKLHMGH). Residues 634 to 638 (KMSKS) carry the 'KMSKS' region motif. Lys637 contacts ATP.

This sequence belongs to the class-I aminoacyl-tRNA synthetase family.

The protein localises to the cytoplasm. The catalysed reaction is tRNA(Leu) + L-leucine + ATP = L-leucyl-tRNA(Leu) + AMP + diphosphate. This Neisseria meningitidis serogroup C (strain 053442) protein is Leucine--tRNA ligase.